The chain runs to 184 residues: Ribosome maturation factor RimM (184 aa).

The region spanning 101–180 (DGEFFYCDLV…KITTNNAKTL (80 aa)) is the PRC barrel domain.

Belongs to the RimM family. In terms of assembly, binds ribosomal protein uS19.

Its subcellular location is the cytoplasm. In terms of biological role, an accessory protein needed during the final step in the assembly of 30S ribosomal subunit, possibly for assembly of the head region. Essential for efficient processing of 16S rRNA. May be needed both before and after RbfA during the maturation of 16S rRNA. It has affinity for free ribosomal 30S subunits but not for 70S ribosomes. In Helicobacter pylori (strain Shi470), this protein is Ribosome maturation factor RimM.